Consider the following 360-residue polypeptide: Peptide chain release factor 1 (360 aa).

At Q235 the chain carries N5-methylglutamine. The span at 284-293 (QRRQQEESST) shows a compositional bias: basic and acidic residues. Residues 284–311 (QRRQQEESSTRRNLLGSGDRSDRIRTYN) form a disordered region.

The protein belongs to the prokaryotic/mitochondrial release factor family. In terms of processing, methylated by PrmC. Methylation increases the termination efficiency of RF1.

Its subcellular location is the cytoplasm. Peptide chain release factor 1 directs the termination of translation in response to the peptide chain termination codons UAG and UAA. This Sodalis glossinidius (strain morsitans) protein is Peptide chain release factor 1.